A 973-amino-acid chain; its full sequence is Sensor histidine kinase TmoS (973 aa).

The region spanning 32–103 is the PAS 1 domain; the sequence is REELARIIFD…NQKRLVEAAS (72 aa). A PAC 1 domain is found at 108 to 162; that stretch reads VRCDIEILGKSGGREVIAVDFSLLPIRDEQENIVFLLAEGRNITDKKKAEAMLAL. A Histidine kinase 1 domain is found at 187–405; it reads KVSHELRTPL…LFQVKLPLNA (219 aa). Residue histidine 190 is modified to Phosphohistidine; by autocatalysis. Residues 452–567 enclose the Response regulatory domain; that stretch reads RVLIVEDNPD…ELRARVSNLI (116 aa). Aspartate 500 bears the 4-aspartylphosphate mark. Residues 611-681 enclose the PAS 2 domain; sequence SEARWKAVYE…QRLARLLQSG (71 aa). Residues 685-737 form the PAC 2 domain; the sequence is YSVECSYLCKNGSTIWANASVSLMSPRVDEPQVILQIIDDITEKKQAQETLNQ. The Histidine kinase 2 domain maps to 757-973; it reads YIAHEINQPL…ACFFVSIPVS (217 aa). Position 760 is a phosphohistidine (histidine 760).

Autophosphorylated. Activation requires a sequential transfer of a phosphate group from a His in the primary transmitter domain, to an Asp in the receiver domain and to a His in the secondary transmitter domain.

Its subcellular location is the cytoplasm. The catalysed reaction is ATP + protein L-histidine = ADP + protein N-phospho-L-histidine.. Activity is regulated by agonists and antagonists. Binding of agonists such as toluene or benzene to TmoS stimulates autophosphorylation. Toluene causes the most pronounced increase, followed by benzene, chlorobenzene and ethylbenzene. Activity is inhibited by antagonists such as o-xylene, o-chlorotoluene and trimethylbenzene isomers, which bind to TmoS but do not stimulate autophosphorylation. Functionally, member of the two-component regulatory system TmoS/TmoT involved in the regulation of toluene degradation. Probably phosphorylates TmoT via a four-step phosphorelay in response to toluene. Can also be induced by benzene and ethylbenzene. In Ectopseudomonas mendocina (Pseudomonas mendocina), this protein is Sensor histidine kinase TmoS (tmoS).